The sequence spans 188 residues: Large ribosomal subunit protein eL18 (188 aa).

Residue Lys-119 forms a Glycyl lysine isopeptide (Lys-Gly) (interchain with G-Cter in SUMO2) linkage. Phosphoserine is present on Ser-130. A disordered region spans residues 151 to 188 (HFGKAPGTPHSHTKPYVRSKGRKFERARGRRASRGYKN). Residue Thr-158 is modified to Phosphothreonine. Composition is skewed to basic residues over residues 161–171 (SHTKPYVRSKG) and 178–188 (RGRRASRGYKN). Lys-164 is covalently cross-linked (Glycyl lysine isopeptide (Lys-Gly) (interchain with G-Cter in SUMO2)).

The protein belongs to the eukaryotic ribosomal protein eL18 family. As to quaternary structure, component of the large ribosomal subunit.

It is found in the cytoplasm. The protein localises to the cytosol. Its subcellular location is the rough endoplasmic reticulum. In terms of biological role, component of the large ribosomal subunit. The ribosome is a large ribonucleoprotein complex responsible for the synthesis of proteins in the cell. The sequence is that of Large ribosomal subunit protein eL18 (RPL18) from Canis lupus familiaris (Dog).